The sequence spans 201 residues: Myosin regulatory light chain 2 (201 aa).

A disordered region spans residues 1 to 48 (MADKDKKVKKKKAKEDAPAEEAPAAAAPAGDRQSSRGSRKAKRTGSNV). Residues 20–29 (EEAPAAAAPA) are compositionally biased toward low complexity. Ser-46 is subject to Phosphoserine. EF-hand domains follow at residues 55–90 (KQVAEFKEAFQLMDHDKDGIIGKNDLRATFDSLGRL), 125–158 (DEDDVVINAFKTFDEEGKIDSERLRHALMTWGDK), and 159–194 (FSADEVDEAYDQMDIDDKGYIDTTKLIAMLTASAEE). Ca(2+) contacts are provided by Asp-68, Asp-70, Asp-72, and Asp-79.

As to quaternary structure, myosin is a hexamer of 2 heavy chains and 4 light chains.

This chain is Myosin regulatory light chain 2, found in Bombyx mori (Silk moth).